The primary structure comprises 245 residues: uncharacterized protein (245 aa).

The first 19 residues, 1-19 (MKLTQFISYAILSLSGVQA), serve as a signal peptide directing secretion.

The protein resides in the secreted. This is an uncharacterized protein from Arthroderma benhamiae (strain ATCC MYA-4681 / CBS 112371) (Trichophyton mentagrophytes).